A 270-amino-acid chain; its full sequence is Undecaprenyl-diphosphatase (270 aa).

Transmembrane regions (helical) follow at residues 3–23 (TIVTAILLGIVEGLTEFLPVS), 42–62 (WAMFNVVIQLGAILAVVVQYW), 86–106 (LLAAFIPSAILGLALKKYIDV), 108–128 (LGSPSVVCWALIAGGIAILVI), 184–204 (AEFSFFLAIPTMLGATTLELL), 217–237 (VGWSEIGVGFAVSFVVALAVI), and 249–269 (FKPFAWYRIAAGAVALGWLAM).

It belongs to the UppP family.

Its subcellular location is the cell inner membrane. The enzyme catalyses di-trans,octa-cis-undecaprenyl diphosphate + H2O = di-trans,octa-cis-undecaprenyl phosphate + phosphate + H(+). Functionally, catalyzes the dephosphorylation of undecaprenyl diphosphate (UPP). Confers resistance to bacitracin. This chain is Undecaprenyl-diphosphatase, found in Novosphingobium aromaticivorans (strain ATCC 700278 / DSM 12444 / CCUG 56034 / CIP 105152 / NBRC 16084 / F199).